The chain runs to 293 residues: Phosphatidate cytidylyltransferase (293 aa).

The next 8 helical transmembrane spans lie at 6-26 (IISA…GGWY), 51-71 (IAPA…SATV), 73-93 (PHLT…YLLF), 97-117 (MATI…GYLP), 157-177 (LLVT…AYIM), 195-215 (VEGS…GAWY), 218-238 (WPYW…VSLL), and 273-293 (VFTA…LNNL).

The protein belongs to the CDS family.

It is found in the cell membrane. The enzyme catalyses a 1,2-diacyl-sn-glycero-3-phosphate + CTP + H(+) = a CDP-1,2-diacyl-sn-glycerol + diphosphate. Its pathway is phospholipid metabolism; CDP-diacylglycerol biosynthesis; CDP-diacylglycerol from sn-glycerol 3-phosphate: step 3/3. This chain is Phosphatidate cytidylyltransferase (cdsA), found in Synechocystis sp. (strain ATCC 27184 / PCC 6803 / Kazusa).